The sequence spans 545 residues: Chaperonin GroEL (545 aa).

ATP is bound by residues 30–33, Lys-51, 87–91, Gly-413, 477–479, and Asp-493; these read TLGP, DGTTT, and NAA.

It belongs to the chaperonin (HSP60) family. As to quaternary structure, forms a cylinder of 14 subunits composed of two heptameric rings stacked back-to-back. Interacts with the co-chaperonin GroES.

The protein resides in the cytoplasm. It catalyses the reaction ATP + H2O + a folded polypeptide = ADP + phosphate + an unfolded polypeptide.. Together with its co-chaperonin GroES, plays an essential role in assisting protein folding. The GroEL-GroES system forms a nano-cage that allows encapsulation of the non-native substrate proteins and provides a physical environment optimized to promote and accelerate protein folding. The chain is Chaperonin GroEL from Pseudomonas putida (Arthrobacter siderocapsulatus).